Consider the following 857-residue polypeptide: Glucans biosynthesis glucosyltransferase H (857 aa).

6 helical membrane passes run 142 to 162, 196 to 216, 515 to 535, 572 to 592, 606 to 626, and 682 to 702; these read ILLA…KGIL, ILIL…TALM, VFLT…FLVL, LFST…ILIW, TLSM…RMIF, and FLWW…VSVI.

It belongs to the glycosyltransferase 2 family. OpgH subfamily.

Its subcellular location is the cell inner membrane. The protein operates within glycan metabolism; osmoregulated periplasmic glucan (OPG) biosynthesis. Functionally, involved in the biosynthesis of osmoregulated periplasmic glucans (OPGs). The protein is Glucans biosynthesis glucosyltransferase H of Pseudomonas putida (strain ATCC 700007 / DSM 6899 / JCM 31910 / BCRC 17059 / LMG 24140 / F1).